Here is a 1047-residue protein sequence, read N- to C-terminus: Atrial natriuretic peptide receptor 2 (1047 aa).

An N-terminal signal peptide occupies residues 1-22 (MALPSLLLLVAALAGGVRPPGA). At 23-458 (RNLTLAVVLP…DKTPLSTLAI (436 aa)) the chain is on the extracellular side. Asn-24 and Asn-35 each carry an N-linked (GlcNAc...) asparagine glycan. Cys-75 and Cys-101 are joined by a disulfide. N-linked (GlcNAc...) asparagine glycosylation is found at Asn-161, Asn-195, Asn-244, Asn-277, and Asn-349. The chain crosses the membrane as a helical span at residues 459 to 478 (VALGTGITFIMFGVSSFLIF). The Cytoplasmic segment spans residues 479–1047 (RKLMLEKELA…GERKGPPGLL (569 aa)). A Phosphoserine modification is found at Ser-513. Positions 513-786 (SRLTLSLRGS…PDFGQIKGFI (274 aa)) constitute a Protein kinase domain. Thr-516 is modified (phosphothreonine). Phosphoserine is present on residues Ser-518, Ser-522, Ser-523, and Ser-526. Thr-529 carries the post-translational modification Phosphothreonine. One can recognise a Guanylate cyclase domain in the interval 861–991 (TIYFSDIVGF…DTVNTASRME (131 aa)).

The protein belongs to the adenylyl cyclase class-4/guanylyl cyclase family. Phosphorylated. Phosphorylation of the protein kinase-like domain is required for full activation by CNP. Post-translationally, glycosylated.

The protein resides in the cell membrane. It carries out the reaction GTP = 3',5'-cyclic GMP + diphosphate. Receptor for the C-type natriuretic peptide NPPC/CNP hormone. Has guanylate cyclase activity upon binding of its ligand. May play a role in the regulation of skeletal growth. In Homo sapiens (Human), this protein is Atrial natriuretic peptide receptor 2 (NPR2).